The sequence spans 140 residues: uncharacterized protein (140 aa).

The next 2 membrane-spanning stretches (helical) occupy residues 4–21 and 26–48; these read ILKF…YLFG and LVKV…SGYL.

It belongs to the bacteriophage holin family. Cp-1 holin subfamily.

It localises to the cell membrane. This is an uncharacterized protein from Listeria monocytogenes serovar 1/2a (strain ATCC BAA-679 / EGD-e).